The chain runs to 122 residues: Protein SPIRAL1-like 3 (122 aa).

2 disordered regions span residues 1–78 (MGKA…NNYF) and 96–122 (KVHAAPGGGSSLDYLFGGPSPAGSGNK). Over residues 32–61 (TMGTTTTTTTTTTTDGTGGRPITTTTTTVT) the composition is skewed to low complexity. Serine 73 is modified (phosphoserine).

The protein belongs to the SPIRAL1 family. As to expression, ubiquitous. Preferentially expressed in above-ground organs.

Functionally, acts redundantly with SPR1 in maintaining the cortical microtubules organization essential for anisotropic cell growth. This is Protein SPIRAL1-like 3 (SP1L3) from Arabidopsis thaliana (Mouse-ear cress).